The following is a 216-amino-acid chain: DNA replication complex GINS protein psf1 (216 aa).

The disordered stretch occupies residues Q110–P133. Over residues T111–T127 the composition is skewed to gly residues.

Belongs to the GINS1/PSF1 family. In terms of assembly, component of the GINS complex which is a heterotetramer of div-26/sld5, drc-1/psf1, drc-2/psf2 and drc-3/psf3.

The protein resides in the nucleus. In terms of biological role, the GINS complex plays an essential role in the initiation of DNA replication. In Neurospora crassa (strain ATCC 24698 / 74-OR23-1A / CBS 708.71 / DSM 1257 / FGSC 987), this protein is DNA replication complex GINS protein psf1 (drc-1).